Here is a 259-residue protein sequence, read N- to C-terminus: Trans-4-hydroxycyclohexanecarboxylate dehydrogenase (259 aa).

R20, M22, D41, D73, V74, N100, Y164, K168, V197, T199, and T202 together coordinate NAD(+). Residue Y164 is the Proton acceptor of the active site.

It belongs to the short-chain dehydrogenases/reductases (SDR) family. As to quaternary structure, homodimer. Homotetramer.

It carries out the reaction trans-4-hydroxycyclohexane-1-carboxylate + NAD(+) = 4-oxocyclohexane-1-carboxylate + NADH + H(+). With respect to regulation, strongly inhibited by N-bromosuccinimide. Not inhibited by sulfhydryl reagents, such as iodoacetic acid, iodoacetamide, N-ethylmaleimide and p-hydroxymercuribenzoic acid. Its function is as follows. Dehydrogenase involved in a cyclohexanecarboxylate (CHCA) degradation pathway. Catalyzes the NAD(+)-dependent dehydrogenation of trans-4-hydroxycyclohexanecarboxylate (trans-4-hydroxyCHCA) to form 4-oxocyclohexanecarboxylate (4-oxoCHCA). Is highly specific for the trans-4-hydroxy derivative and shows only weak activity with cis-4-hydroxyCHCA. Can also catalyze the reverse reaction (4-oxoCHCA reduction) with a higher catalytic efficiency. In the reverse reaction, is highly specific for 4-oxoCHCA and cannot use either the 2-oxo or the 3-oxo homolog as substrate. Cannot use NADP(+). The sequence is that of Trans-4-hydroxycyclohexanecarboxylate dehydrogenase from Sinomonas cyclohexanicum (Corynebacterium cyclohexanicum).